Consider the following 245-residue polypeptide: UPF0328 protein ECU09_2010 (245 aa).

It belongs to the UPF0328 family.

This is UPF0328 protein ECU09_2010 from Encephalitozoon cuniculi (strain GB-M1) (Microsporidian parasite).